Reading from the N-terminus, the 383-residue chain is Acetylornithine deacetylase (383 aa).

Residue H80 participates in Zn(2+) binding. D82 is a catalytic residue. Position 112 (D112) interacts with Zn(2+). The active site involves E144. 3 residues coordinate Zn(2+): E145, E169, and H355.

Belongs to the peptidase M20A family. ArgE subfamily. In terms of assembly, homodimer. Requires Zn(2+) as cofactor. The cofactor is Co(2+). It depends on glutathione as a cofactor.

The protein localises to the cytoplasm. It catalyses the reaction N(2)-acetyl-L-ornithine + H2O = L-ornithine + acetate. The protein operates within amino-acid biosynthesis; L-arginine biosynthesis; L-ornithine from N(2)-acetyl-L-ornithine (linear): step 1/1. Its function is as follows. Catalyzes the hydrolysis of the amide bond of N(2)-acetylated L-amino acids. Cleaves the acetyl group from N-acetyl-L-ornithine to form L-ornithine, an intermediate in L-arginine biosynthesis pathway, and a branchpoint in the synthesis of polyamines. In Escherichia coli O9:H4 (strain HS), this protein is Acetylornithine deacetylase.